We begin with the raw amino-acid sequence, 335 residues long: Fructose-1,6-bisphosphatase class 1 (335 aa).

Positions 92, 114, 116, and 117 each coordinate Mg(2+). Substrate-binding positions include 117 to 120 (DGSS), N209, and K275. E281 lines the Mg(2+) pocket.

This sequence belongs to the FBPase class 1 family. As to quaternary structure, homotetramer. It depends on Mg(2+) as a cofactor.

Its subcellular location is the cytoplasm. It carries out the reaction beta-D-fructose 1,6-bisphosphate + H2O = beta-D-fructose 6-phosphate + phosphate. Its pathway is carbohydrate biosynthesis; gluconeogenesis. The polypeptide is Fructose-1,6-bisphosphatase class 1 (Polaromonas sp. (strain JS666 / ATCC BAA-500)).